Here is a 109-residue protein sequence, read N- to C-terminus: Nucleoid-associated protein HI_0442 (109 aa).

Belongs to the YbaB/EbfC family. As to quaternary structure, homodimer.

Its subcellular location is the cytoplasm. The protein resides in the nucleoid. Its function is as follows. Binds to DNA and alters its conformation. May be involved in regulation of gene expression, nucleoid organization and DNA protection. In Haemophilus influenzae (strain ATCC 51907 / DSM 11121 / KW20 / Rd), this protein is Nucleoid-associated protein HI_0442.